We begin with the raw amino-acid sequence, 231 residues long: Large ribosomal subunit protein uL1 (231 aa).

Belongs to the universal ribosomal protein uL1 family. Part of the 50S ribosomal subunit.

Binds directly to 23S rRNA. The L1 stalk is quite mobile in the ribosome, and is involved in E site tRNA release. Its function is as follows. Protein L1 is also a translational repressor protein, it controls the translation of the L11 operon by binding to its mRNA. This is Large ribosomal subunit protein uL1 from Acidovorax ebreus (strain TPSY) (Diaphorobacter sp. (strain TPSY)).